Reading from the N-terminus, the 352-residue chain is Phosphoribosylformylglycinamidine cyclo-ligase (352 aa).

The protein belongs to the AIR synthase family.

It is found in the cytoplasm. The enzyme catalyses 2-formamido-N(1)-(5-O-phospho-beta-D-ribosyl)acetamidine + ATP = 5-amino-1-(5-phospho-beta-D-ribosyl)imidazole + ADP + phosphate + H(+). It participates in purine metabolism; IMP biosynthesis via de novo pathway; 5-amino-1-(5-phospho-D-ribosyl)imidazole from N(2)-formyl-N(1)-(5-phospho-D-ribosyl)glycinamide: step 2/2. In Pseudomonas putida (strain GB-1), this protein is Phosphoribosylformylglycinamidine cyclo-ligase.